The sequence spans 674 residues: Probable protein phosphatase 2C 66 (674 aa).

At serine 125 the chain carries Phosphoserine. Disordered stretches follow at residues 153-175 (YSGPIESTKKTEKEKPKKIRKKP) and 202-247 (KSVI…KQSM). The PPM-type phosphatase domain maps to 244-665 (KQSMNSVLDV…DDVSVIVISL (422 aa)). Aspartate 282 and glycine 283 together coordinate Mn(2+). Basic and acidic residues predominate over residues 373 to 384 (NNKTKSDNRCDQ). The segment at 373–392 (NNKTKSDNRCDQKGSNSTTT) is disordered. Residues aspartate 593 and aspartate 656 each coordinate Mn(2+).

Belongs to the PP2C family. It depends on Mg(2+) as a cofactor. Requires Mn(2+) as cofactor. As to expression, expressed at low level in seedlings, roots, leaves, stems, young inflorescences, flowers and siliques.

It is found in the nucleus. It catalyses the reaction O-phospho-L-seryl-[protein] + H2O = L-seryl-[protein] + phosphate. It carries out the reaction O-phospho-L-threonyl-[protein] + H2O = L-threonyl-[protein] + phosphate. The sequence is that of Probable protein phosphatase 2C 66 (PLL2) from Arabidopsis thaliana (Mouse-ear cress).